Reading from the N-terminus, the 562-residue chain is MDDNKRPLYLPFAGPAILEAPLINKGSAFSEEERIFFNLEGLVPYAIETIEEQASRAYDQFRSFNNDLDKHIYLRNIQDTNETLFYRLVQNHISEMMPIIYTPTVGLACERFSKNYRRNRGLFISYPNKDRIDDILNNSTRQKVKIIVVTDGERILGLGDQGIGGMGIPIGKLSLYTSCGGISPAYTLPITLDVGTDNPQLLEDPMYMGWRHPRIGGEEYAEFIEAFMQAVHVRWPDTLIQFEDFAQKNAMPILERYKERYCCFNDDIQGTAAVTVGSLLAACKAAGTELNKQRVAFLGAGSAGCGIAEAIVAQMVSEGISDEQARSQVCMVDRWGLLLDNMPNLLPFQQKLAQKCADISHWNNFSDNISLLDVVNNAKPTVLIGVSGAPGLFTEEIVRAMHSHCPRPIIFPLSNPTSRVEATPKDILHWTSGQALVATGSPFEPVVVDGETYEIAQCNNSFIFPGIGLGVLASGARHVSDAMLMASSRALAECSPLAINGSGPLLPKLEDIHSVSKHIAFAVGKVAIEQGLSLPASDELLMQSIEDNFWKPEYRRYKRTSF.

Tyrosine 101 functions as the Proton donor in the catalytic mechanism. Residue arginine 154 participates in NAD(+) binding. Lysine 172 (proton acceptor) is an active-site residue. 3 residues coordinate a divalent metal cation: glutamate 243, aspartate 244, and aspartate 267. NAD(+) contacts are provided by aspartate 267 and asparagine 415.

This sequence belongs to the malic enzymes family. Homotetramer. Mg(2+) serves as cofactor. Mn(2+) is required as a cofactor.

The enzyme catalyses (S)-malate + NAD(+) = pyruvate + CO2 + NADH. It carries out the reaction oxaloacetate + H(+) = pyruvate + CO2. In Shewanella oneidensis (strain ATCC 700550 / JCM 31522 / CIP 106686 / LMG 19005 / NCIMB 14063 / MR-1), this protein is NAD-dependent malic enzyme.